The chain runs to 399 residues: S-adenosylmethionine synthase (399 aa).

Residue histidine 15 participates in ATP binding. Mg(2+) is bound at residue aspartate 17. A K(+)-binding site is contributed by glutamate 43. Residues glutamate 56 and glutamine 99 each contribute to the L-methionine site. The interval 99-109 (QSADIAQGVDN) is flexible loop. ATP contacts are provided by residues 174 to 176 (DGK), 244 to 245 (RF), aspartate 253, 259 to 260 (RK), alanine 276, and lysine 280. Aspartate 253 serves as a coordination point for L-methionine. Lysine 284 is a binding site for L-methionine.

It belongs to the AdoMet synthase family. In terms of assembly, homotetramer; dimer of dimers. The cofactor is Mg(2+). K(+) serves as cofactor.

The protein resides in the cytoplasm. The enzyme catalyses L-methionine + ATP + H2O = S-adenosyl-L-methionine + phosphate + diphosphate. It functions in the pathway amino-acid biosynthesis; S-adenosyl-L-methionine biosynthesis; S-adenosyl-L-methionine from L-methionine: step 1/1. In terms of biological role, catalyzes the formation of S-adenosylmethionine (AdoMet) from methionine and ATP. The overall synthetic reaction is composed of two sequential steps, AdoMet formation and the subsequent tripolyphosphate hydrolysis which occurs prior to release of AdoMet from the enzyme. In Salinispora tropica (strain ATCC BAA-916 / DSM 44818 / JCM 13857 / NBRC 105044 / CNB-440), this protein is S-adenosylmethionine synthase.